We begin with the raw amino-acid sequence, 368 residues long: 4-hydroxy-3-methylbut-2-en-1-yl diphosphate synthase (flavodoxin) (368 aa).

The [4Fe-4S] cluster site is built by C271, C274, C306, and E313.

This sequence belongs to the IspG family. Requires [4Fe-4S] cluster as cofactor.

It catalyses the reaction (2E)-4-hydroxy-3-methylbut-2-enyl diphosphate + oxidized [flavodoxin] + H2O + 2 H(+) = 2-C-methyl-D-erythritol 2,4-cyclic diphosphate + reduced [flavodoxin]. It functions in the pathway isoprenoid biosynthesis; isopentenyl diphosphate biosynthesis via DXP pathway; isopentenyl diphosphate from 1-deoxy-D-xylulose 5-phosphate: step 5/6. Its function is as follows. Converts 2C-methyl-D-erythritol 2,4-cyclodiphosphate (ME-2,4cPP) into 1-hydroxy-2-methyl-2-(E)-butenyl 4-diphosphate. In Mannheimia succiniciproducens (strain KCTC 0769BP / MBEL55E), this protein is 4-hydroxy-3-methylbut-2-en-1-yl diphosphate synthase (flavodoxin).